Consider the following 302-residue polypeptide: MSEKTDLSELRRGTELVKRGFARMQKGGVIMDVVDAEQARIAEDAGAVAVMALESVPADIRKRGGVARMPDPDIVPEIIDEVSIPAMGKSRIGHTKEAEILESLGVDMIDESEVLTPADDRYHIDKRHFTAPFVCGARNLQEALRRIDEGAAMIRTKGEAGTGDVNQAVHHQRNIKSSIRELVGKSYEERERWARDHEAPAELVHETAEMGRLPVVNFAAGGIATPADAALMMHHGCDGIFVGSGVFGAENPRAMGRAIVEAVNNWDDPDELAQIASNPGKGMKGEANADLSEGEKLQTRGV.

D32 serves as a coordination point for D-ribose 5-phosphate. K89 functions as the Schiff-base intermediate with D-ribose 5-phosphate in the catalytic mechanism. G161 provides a ligand contact to D-ribose 5-phosphate. R173 serves as a coordination point for D-glyceraldehyde 3-phosphate. Residues G222 and 243–244 (GS) contribute to the D-ribose 5-phosphate site. The interval 276–302 (ASNPGKGMKGEANADLSEGEKLQTRGV) is disordered. A compositionally biased stretch (basic and acidic residues) spans 293–302 (EGEKLQTRGV).

The protein belongs to the PdxS/SNZ family. As to quaternary structure, in the presence of PdxT, forms a dodecamer of heterodimers.

The enzyme catalyses aldehydo-D-ribose 5-phosphate + D-glyceraldehyde 3-phosphate + L-glutamine = pyridoxal 5'-phosphate + L-glutamate + phosphate + 3 H2O + H(+). It functions in the pathway cofactor biosynthesis; pyridoxal 5'-phosphate biosynthesis. Its function is as follows. Catalyzes the formation of pyridoxal 5'-phosphate from ribose 5-phosphate (RBP), glyceraldehyde 3-phosphate (G3P) and ammonia. The ammonia is provided by the PdxT subunit. Can also use ribulose 5-phosphate and dihydroxyacetone phosphate as substrates, resulting from enzyme-catalyzed isomerization of RBP and G3P, respectively. The chain is Pyridoxal 5'-phosphate synthase subunit PdxS from Haloquadratum walsbyi (strain DSM 16790 / HBSQ001).